The chain runs to 478 residues: ATP synthase subunit beta (478 aa).

151 to 158 (GGAGVGKT) is an ATP binding site.

It belongs to the ATPase alpha/beta chains family. As to quaternary structure, F-type ATPases have 2 components, CF(1) - the catalytic core - and CF(0) - the membrane proton channel. CF(1) has five subunits: alpha(3), beta(3), gamma(1), delta(1), epsilon(1). CF(0) has three main subunits: a(1), b(2) and c(9-12). The alpha and beta chains form an alternating ring which encloses part of the gamma chain. CF(1) is attached to CF(0) by a central stalk formed by the gamma and epsilon chains, while a peripheral stalk is formed by the delta and b chains.

It localises to the cell inner membrane. It catalyses the reaction ATP + H2O + 4 H(+)(in) = ADP + phosphate + 5 H(+)(out). In terms of biological role, produces ATP from ADP in the presence of a proton gradient across the membrane. The catalytic sites are hosted primarily by the beta subunits. The sequence is that of ATP synthase subunit beta from Azorhizobium caulinodans (strain ATCC 43989 / DSM 5975 / JCM 20966 / LMG 6465 / NBRC 14845 / NCIMB 13405 / ORS 571).